Consider the following 214-residue polypeptide: Outer-membrane lipoprotein LolB (214 aa).

An N-terminal signal peptide occupies residues 1-25 (MNNLKRFTESIFSCIALSTLLFLGG). C26 is lipidated: N-palmitoyl cysteine. A lipid anchor (S-diacylglycerol cysteine) is attached at C26.

It belongs to the LolB family. In terms of assembly, monomer.

Its subcellular location is the cell outer membrane. In terms of biological role, plays a critical role in the incorporation of lipoproteins in the outer membrane after they are released by the LolA protein. This is Outer-membrane lipoprotein LolB from Shewanella putrefaciens (strain CN-32 / ATCC BAA-453).